Consider the following 523-residue polypeptide: Ubiquitin carboxyl-terminal hydrolase 22-A (523 aa).

The UBP-type zinc finger occupies 4-121; the sequence is AGCSHVNSFK…KEEQRKAWKL (118 aa). Zn(2+) is bound by residues Cys6, His8, Cys46, Cys49, Cys59, Cys62, Cys67, His72, His76, His82, Cys95, and Cys98. In terms of domain architecture, USP spans 174–518; the sequence is RGLINLGNTC…EGYLLFYHKQ (345 aa). The active-site Nucleophile is Cys183. The active-site Proton acceptor is the His477.

This sequence belongs to the peptidase C19 family. UBP8 subfamily. In terms of assembly, component of some SAGA transcription coactivator-HAT complexes.

It localises to the nucleus. The enzyme catalyses Thiol-dependent hydrolysis of ester, thioester, amide, peptide and isopeptide bonds formed by the C-terminal Gly of ubiquitin (a 76-residue protein attached to proteins as an intracellular targeting signal).. Functionally, histone deubiquitinating component of the transcription regulatory histone acetylation (HAT) complex SAGA. Catalyzes the deubiquitination of both histones H2A and H2B, thereby acting as a coactivator. Recruited to specific gene promoters by activators, where it is required for transcription. The chain is Ubiquitin carboxyl-terminal hydrolase 22-A (usp22-a) from Xenopus laevis (African clawed frog).